The chain runs to 292 residues: RNA 5'-monophosphate methyltransferase (292 aa).

The interval Met1 to Ser21 is disordered. S-adenosyl-L-methionine contacts are provided by residues Arg46, Asn76, Asp110, Asp135–Phe136, and Met164. The region spanning Glu53–Pro274 is the Bin3-type SAM domain.

This sequence belongs to the methyltransferase superfamily. Interacts with DICER1; the interaction may be mediated by RNA.

It is found in the cytoplasm. The enzyme catalyses a 5'-end 5'-phospho-ribonucleoside-RNA + S-adenosyl-L-methionine = a 5'-end (5'-methylphospho)-ribonucleoside-RNA + S-adenosyl-L-homocysteine. It catalyses the reaction a 5'-end 5'-phospho-ribonucleoside-RNA + 2 S-adenosyl-L-methionine = a 5'-end (5'-bismethylphospho)-ribonucleoside-RNA + 2 S-adenosyl-L-homocysteine. In terms of biological role, O-methyltransferase that specifically monomethylates 5'-monophosphate of cytoplasmic histidyl tRNA (tRNA(His)), acting as a capping enzyme by protecting tRNA(His) from cleavage by DICER1. Also able, with less efficiently, to methylate the 5' monophosphate of a subset of pre-miRNAs, acting as a negative regulator of miRNA processing. The 5' monophosphate of pre-miRNAs is recognized by DICER1 and is required for pre-miRNAs processing: methylation at this position reduces the processing of pre-miRNAs by DICER1. Was also reported to mediate dimethylation of pre-miR-145; however dimethylation cannot be reproduced by another group which observes a monomethylation of pre-miR-145. This chain is RNA 5'-monophosphate methyltransferase, found in Homo sapiens (Human).